The chain runs to 454 residues: UPF0210 protein Memar_2269 (454 aa).

It belongs to the UPF0210 family.

The sequence is that of UPF0210 protein Memar_2269 from Methanoculleus marisnigri (strain ATCC 35101 / DSM 1498 / JR1).